Here is a 106-residue protein sequence, read N- to C-terminus: Iron-sulfur cluster assembly protein CyaY (106 aa).

This sequence belongs to the frataxin family.

Involved in iron-sulfur (Fe-S) cluster assembly. May act as a regulator of Fe-S biogenesis. The chain is Iron-sulfur cluster assembly protein CyaY from Yersinia pseudotuberculosis serotype O:3 (strain YPIII).